The following is a 549-amino-acid chain: Probable protein kinase UbiB (549 aa).

The Protein kinase domain maps to 123–501; it reads DFEDTPLASA…QQKAHKSNYL (379 aa). Residues 129-137 and K152 each bind ATP; that span reads LASASISQV. D287 acts as the Proton acceptor in catalysis. 2 helical membrane-spanning segments follow: residues 498 to 518 and 520 to 540; these read SNYL…LLNQ and ATLW…VLGW.

It belongs to the ABC1 family. UbiB subfamily.

Its subcellular location is the cell inner membrane. Its pathway is cofactor biosynthesis; ubiquinone biosynthesis [regulation]. Is probably a protein kinase regulator of UbiI activity which is involved in aerobic coenzyme Q (ubiquinone) biosynthesis. The sequence is that of Probable protein kinase UbiB from Shewanella piezotolerans (strain WP3 / JCM 13877).